The chain runs to 275 residues: Myoblast determination protein 1 homolog 2 (275 aa).

A bHLH domain is found at D84–L135. Polar residues predominate over residues S232 to Q265. The tract at residues S232–L275 is disordered.

Efficient DNA binding requires dimerization with another bHLH protein.

The protein localises to the nucleus. Functionally, may act as a transcriptional activator that promotes transcription of muscle-specific target genes and plays a role in muscle differentiation. The polypeptide is Myoblast determination protein 1 homolog 2 (myod2) (Oncorhynchus mykiss (Rainbow trout)).